A 169-amino-acid chain; its full sequence is Cell division inhibitor SulA (169 aa).

Residues 106-112 form a ftsZ binding region; it reads ALRTGNY. The lon protease binding stretch occupies residues 162–169; it reads KIHSNLYH.

This sequence belongs to the SulA family. In terms of assembly, interacts with FtsZ. In terms of processing, is rapidly cleaved and degraded by the Lon protease once DNA damage is repaired.

In terms of biological role, component of the SOS system and an inhibitor of cell division. Accumulation of SulA causes rapid cessation of cell division and the appearance of long, non-septate filaments. In the presence of GTP, binds a polymerization-competent form of FtsZ in a 1:1 ratio, thus inhibiting FtsZ polymerization and therefore preventing it from participating in the assembly of the Z ring. This mechanism prevents the premature segregation of damaged DNA to daughter cells during cell division. This chain is Cell division inhibitor SulA, found in Escherichia coli O81 (strain ED1a).